We begin with the raw amino-acid sequence, 954 residues long: Glycine dehydrogenase (decarboxylating) (954 aa).

At Lys699 the chain carries N6-(pyridoxal phosphate)lysine.

The protein belongs to the GcvP family. The glycine cleavage system is composed of four proteins: P, T, L and H. Pyridoxal 5'-phosphate is required as a cofactor.

The catalysed reaction is N(6)-[(R)-lipoyl]-L-lysyl-[glycine-cleavage complex H protein] + glycine + H(+) = N(6)-[(R)-S(8)-aminomethyldihydrolipoyl]-L-lysyl-[glycine-cleavage complex H protein] + CO2. The glycine cleavage system catalyzes the degradation of glycine. The P protein binds the alpha-amino group of glycine through its pyridoxal phosphate cofactor; CO(2) is released and the remaining methylamine moiety is then transferred to the lipoamide cofactor of the H protein. The protein is Glycine dehydrogenase (decarboxylating) of Nitrobacter winogradskyi (strain ATCC 25391 / DSM 10237 / CIP 104748 / NCIMB 11846 / Nb-255).